We begin with the raw amino-acid sequence, 95 residues long: Co-chaperonin GroES (95 aa).

The protein belongs to the GroES chaperonin family. In terms of assembly, heptamer of 7 subunits arranged in a ring. Interacts with the chaperonin GroEL.

It is found in the cytoplasm. Its function is as follows. Together with the chaperonin GroEL, plays an essential role in assisting protein folding. The GroEL-GroES system forms a nano-cage that allows encapsulation of the non-native substrate proteins and provides a physical environment optimized to promote and accelerate protein folding. GroES binds to the apical surface of the GroEL ring, thereby capping the opening of the GroEL channel. The protein is Co-chaperonin GroES of Ruthia magnifica subsp. Calyptogena magnifica.